The primary structure comprises 456 residues: RuvB-like helicase 1 (456 aa).

71-78 provides a ligand contact to ATP; it reads GGAGTGKT.

The protein belongs to the RuvB family. In terms of assembly, may form heterododecamers with RVB2. Component of the SWR1 chromatin remodeling complex, the INO80 chromatin remodeling complex, and of the R2TP complex.

Its subcellular location is the nucleus. It carries out the reaction ATP + H2O = ADP + phosphate + H(+). Functionally, DNA helicase which participates in several chromatin remodeling complexes, including the SWR1 and the INO80 complexes. The SWR1 complex mediates the ATP-dependent exchange of histone H2A for the H2A variant HZT1 leading to transcriptional regulation of selected genes by chromatin remodeling. The INO80 complex remodels chromatin by shifting nucleosomes and is involved in DNA repair. Also involved in pre-rRNA processing. The chain is RuvB-like helicase 1 (rvb1) from Schizosaccharomyces pombe (strain 972 / ATCC 24843) (Fission yeast).